The following is a 122-amino-acid chain: ORF7a protein (122 aa).

The signal sequence occupies residues methionine 1 to cysteine 15. Residues glutamate 16 to serine 81 form the X4e domain. The Virion surface portion of the chain corresponds to glutamate 16–glutamate 96. Disulfide bonds link cysteine 23–cysteine 58 and cysteine 35–cysteine 67. Residues leucine 97–isoleucine 117 form a helical membrane-spanning segment. The Intravirion portion of the chain corresponds to lysine 118–glutamate 122. The Di-lysine motif motif lies at lysine 118 to glutamate 122.

Interacts with the spike glycoprotein. Interacts with M protein. Interacts with E protein. Interacts with the ORF3a protein. Interacts with human SGT. Interacts with host ITGAL. Interacts with host BST2.

It localises to the virion. The protein resides in the host endoplasmic reticulum membrane. Its subcellular location is the host endoplasmic reticulum-Golgi intermediate compartment membrane. It is found in the host Golgi apparatus membrane. Its function is as follows. Plays a role as antagonist of host tetherin (BST2), disrupting its antiviral effect. Acts by binding to BST2 thereby interfering with its glycosylation. May suppress small interfering RNA (siRNA). May bind to host ITGAL, thereby playing a role in attachment or modulation of leukocytes. This is ORF7a protein from Severe acute respiratory syndrome coronavirus (SARS-CoV).